A 452-amino-acid polypeptide reads, in one-letter code: MINVTLKQIQSWIPCEIEDQFLNQEINGVTIDSRAISKNMLFIPFKGENVDGHRFVSKALQDGAGAAFYQRGTPIDENVSGPIIWVEDTLTALQQLAQAYLRHVNPKVIAVTGSNGKTTTKDMIESVLHTEFKVKKTQGNYNNEIGLPLTILELDNDTEISILEMGMSGFHEIEFLSNLAQPDIAVITNIGESHMQDLGSREGIAKAKSEITIGLKDNGTFIYDGDEPLLKPHVKEVENAKCISIGVATDNALVCSVDDRDTTGISFTINNKEHYDLPILGKHNMKNATIAIAVGHELGLTYNTIYQNLKNVSLTGMRMEQHTLENDITVINDAYNASPTSMRAAIDTLSTLTGRRILILGDVLELGENSKEMHIGVGNYLEEKHIDVLYTFGNEAKYIYDSGQQHVEKAQHFNSKDDMIEVLINDLKAHDRVLVKGSRGMKLEEVVNALIS.

113–119 (GSNGKTT) contributes to the ATP binding site.

It belongs to the MurCDEF family. MurF subfamily.

The protein resides in the cytoplasm. The catalysed reaction is UDP-N-acetyl-alpha-D-muramoyl-L-alanyl-gamma-D-glutamyl-L-lysine + D-alanyl-D-alanine + ATP = UDP-N-acetyl-alpha-D-muramoyl-L-alanyl-gamma-D-glutamyl-L-lysyl-D-alanyl-D-alanine + ADP + phosphate + H(+). It participates in cell wall biogenesis; peptidoglycan biosynthesis. In terms of biological role, involved in cell wall formation. Catalyzes the final step in the synthesis of UDP-N-acetylmuramoyl-pentapeptide, the precursor of murein. Catalyzes the addition of D-alanyl-D-alanine to UDP-MurNAc-L-alanyl-gamma-D-glutamyl-L-lysine. In vitro, can also use the mesodiaminopimelic acid-containing form of UDP-MurNAc-tripeptide, with the same efficiency, revealing that the discrimination for the amino acid residue at the third position of the peptide in the peptidoglycans is entirely supported by MurE. The sequence is that of UDP-N-acetylmuramoyl-tripeptide--D-alanyl-D-alanine ligase from Staphylococcus aureus (strain NCTC 8325 / PS 47).